Consider the following 413-residue polypeptide: Bestrophin homolog 13 (413 aa).

The next 4 membrane-spanning stretches (helical) occupy residues 29 to 49 (LIYL…IDLI), 72 to 92 (SYTR…NVVA), 236 to 256 (LVYT…TLFG), and 272 to 292 (LVVP…FKVG).

The protein belongs to the anion channel-forming bestrophin (TC 1.A.46) family. Calcium-sensitive chloride channel subfamily. Forms oligomers.

The protein resides in the cell membrane. Forms chloride channels. This Caenorhabditis elegans protein is Bestrophin homolog 13 (best-13).